A 254-amino-acid polypeptide reads, in one-letter code: Major prion protein (254 aa).

An N-terminal signal peptide occupies residues 1-28; it reads MANLGYWLLALFVTTCTDVGLCKKRPKP. The interaction with ADGRG6 stretch occupies residues 23 to 38; that stretch reads KKRPKPGGWNTGGSRY. Residues 23–231 form an interaction with GRB2, ERI3 and SYN1 region; the sequence is KKRPKPGGWN…SQAYYDGRRS (209 aa). The tract at residues 24 to 107 is disordered; that stretch reads KRPKPGGWNT…QWNKPSKPKT (84 aa). Repeat copies occupy residues 51-59, 60-67, 68-75, 76-83, and 84-91. A 5 X 8 AA tandem repeats of P-H-G-G-G-W-G-Q region spans residues 51–91; the sequence is PQSGGTWGQPHGGGWGQPHGGGWGQPHGGGWGQPHGGGWSQ. Residues 55-95 are compositionally biased toward gly residues; the sequence is GTWGQPHGGGWGQPHGGGWGQPHGGGWGQPHGGGWSQGGGT. Cu(2+)-binding residues include His61, Gly62, Gly63, His69, Gly70, Gly71, His77, Gly78, Gly79, His85, Gly86, and Gly87. A disulfide bond links Cys179 and Cys214. Asn181 and Asn197 each carry an N-linked (GlcNAc...) asparagine glycan. Residue Ser231 is the site of GPI-anchor amidated serine attachment. The propeptide at 232–254 is removed in mature form; the sequence is SAVLFSSPPVILLISFLIFLIVG.

The protein belongs to the prion family. In terms of assembly, monomer and homodimer. Has a tendency to aggregate into amyloid fibrils containing a cross-beta spine, formed by a steric zipper of superposed beta-strands. Soluble oligomers may represent an intermediate stage on the path to fibril formation. Copper binding may promote oligomerization. Interacts with GRB2, APP, ERI3/PRNPIP and SYN1. Mislocalized cytosolically exposed PrP interacts with MGRN1; this interaction alters MGRN1 subcellular location and causes lysosomal enlargement. Interacts with APP. Interacts with KIAA1191. Interacts with ADGRG6.

It is found in the cell membrane. Its subcellular location is the golgi apparatus. Its primary physiological function is unclear. May play a role in neuronal development and synaptic plasticity. May be required for neuronal myelin sheath maintenance. May promote myelin homeostasis through acting as an agonist for ADGRG6 receptor. May play a role in iron uptake and iron homeostasis. Soluble oligomers are toxic to cultured neuroblastoma cells and induce apoptosis (in vitro). Association with GPC1 (via its heparan sulfate chains) targets PRNP to lipid rafts. Also provides Cu(2+) or Zn(2+) for the ascorbate-mediated GPC1 deaminase degradation of its heparan sulfate side chains. The chain is Major prion protein (Prnp) from Rattus norvegicus (Rat).